A 350-amino-acid chain; its full sequence is tRNA uridine(34) hydroxylase (350 aa).

The Rhodanese domain occupies 146–240 (DDPDALFIDM…YARKAREQGL (95 aa)). Cys-200 serves as the catalytic Cysteine persulfide intermediate.

It belongs to the TrhO family.

The enzyme catalyses uridine(34) in tRNA + AH2 + O2 = 5-hydroxyuridine(34) in tRNA + A + H2O. Functionally, catalyzes oxygen-dependent 5-hydroxyuridine (ho5U) modification at position 34 in tRNAs, the first step in 5-carboxymethoxyuridine (cmo5U) biosynthesis. May be part of an alternate pathway, which is able to bypass cmo5U biogenesis in a subset of tRNAs under aerobic conditions. In Escherichia coli O127:H6 (strain E2348/69 / EPEC), this protein is tRNA uridine(34) hydroxylase.